Consider the following 288-residue polypeptide: ATP synthase gamma chain (288 aa).

It belongs to the ATPase gamma chain family. As to quaternary structure, F-type ATPases have 2 components, CF(1) - the catalytic core - and CF(0) - the membrane proton channel. CF(1) has five subunits: alpha(3), beta(3), gamma(1), delta(1), epsilon(1). CF(0) has three main subunits: a, b and c.

It is found in the cell membrane. Produces ATP from ADP in the presence of a proton gradient across the membrane. The gamma chain is believed to be important in regulating ATPase activity and the flow of protons through the CF(0) complex. This Staphylococcus aureus (strain bovine RF122 / ET3-1) protein is ATP synthase gamma chain.